The sequence spans 560 residues: Serine/threonine-protein kinase TOS3 (560 aa).

The Protein kinase domain maps to 50 to 344 (FEILATLGNG…LADIKVHPFM (295 aa)). ATP contacts are provided by residues 56-64 (LGNGQYGKV) and lysine 79. Aspartate 189 functions as the Proton acceptor in the catalytic mechanism.

Belongs to the protein kinase superfamily. Ser/Thr protein kinase family. Autophosphorylated.

It catalyses the reaction L-seryl-[protein] + ATP = O-phospho-L-seryl-[protein] + ADP + H(+). The catalysed reaction is L-threonyl-[protein] + ATP = O-phospho-L-threonyl-[protein] + ADP + H(+). In terms of biological role, one of the three SNF1 protein kinases (with SAK1 and ELM1) which are required for growth on nonfermentable carbon sources and nonpreferred sugars and for response to environmental stress. Activates SNF1 by phosphorylation of its activation-loop 'Thr-210'. Required for the regulation by SNF1 of the transcription of a large set of genes, the modification the activity of metabolic enzymes, and the control of various nutrient-responsive cellular developmental processes. Also phosphorylates GAL83, MIG1 and SIP2. The chain is Serine/threonine-protein kinase TOS3 (TOS3) from Saccharomyces cerevisiae (strain ATCC 204508 / S288c) (Baker's yeast).